Reading from the N-terminus, the 375-residue chain is Filamin-binding LIM protein 1 (375 aa).

A filamin-binding region spans residues 1-69 (MASKPEKRVA…KTWTPSGKTN (69 aa)). The segment at 40-176 (ARPWEMLPTK…PPPEEPVTLP (137 aa)) is disordered. Over residues 60 to 83 (KTWTPSGKTNASLSGVTPQLSNGG) the composition is skewed to polar residues. Pro residues-rich tracts occupy residues 98–107 (LPPPPPPPSA) and 133–144 (LPPPPPPPPPQA). 3 consecutive LIM zinc-binding domains span residues 183-244 (DVCG…TLEK), 245-302 (CGKC…RKFA), and 303-372 (PVCS…RSAA). Residues 278-375 (ISDESFALDS…HLKRSAAGCC (98 aa)) form an FERMT2-binding region.

Interacts with FERMT2, FLNA, FLNB and FLNC. Interacts with NKX2-5.

It is found in the cell junction. Its subcellular location is the focal adhesion. It localises to the cytoplasm. The protein resides in the cytoskeleton. The protein localises to the stress fiber. Functionally, serves as an anchoring site for cell-ECM adhesion proteins and filamin-containing actin filaments. Is implicated in cell shape modulation (spreading) and motility. May participate in the regulation of filamin-mediated cross-linking and stabilization of actin filaments. May also regulate the assembly of filamin-containing signaling complexes that control actin assembly. Promotes dissociation of FLNA from ITGB3 and ITGB7. Promotes activation of integrins and regulates integrin-mediated cell-cell adhesion. The sequence is that of Filamin-binding LIM protein 1 (Fblim1) from Mus musculus (Mouse).